The primary structure comprises 169 residues: Peptide deformylase (169 aa).

Cys-91 and His-133 together coordinate Fe cation. The active site involves Glu-134. Residue His-137 participates in Fe cation binding.

The protein belongs to the polypeptide deformylase family. The cofactor is Fe(2+).

The enzyme catalyses N-terminal N-formyl-L-methionyl-[peptide] + H2O = N-terminal L-methionyl-[peptide] + formate. Functionally, removes the formyl group from the N-terminal Met of newly synthesized proteins. Requires at least a dipeptide for an efficient rate of reaction. N-terminal L-methionine is a prerequisite for activity but the enzyme has broad specificity at other positions. This is Peptide deformylase from Klebsiella pneumoniae (strain 342).